Reading from the N-terminus, the 590-residue chain is Nuclear receptor subfamily 2 group C member 1 (590 aa).

Residues methionine 1–methionine 166 form a required for interaction with KAT2B region. Positions phenylalanine 98–cysteine 173 form a DNA-binding region, nuclear receptor. 2 consecutive NR C4-type zinc fingers follow at residues cysteine 101–cysteine 121 and cysteine 137–cysteine 156. Residues serine 185 and serine 203 each carry the phosphoserine modification. Position 208 is a phosphothreonine (threonine 208). Position 210 is a phosphothreonine; by MAPK1 (threonine 210). Lysine 238 participates in a covalent cross-link: Glycyl lysine isopeptide (Lys-Gly) (interchain with G-Cter in SUMO); alternate. Lysine 238 participates in a covalent cross-link: Glycyl lysine isopeptide (Lys-Gly) (interchain with G-Cter in SUMO2); alternate. Residues glutamate 333 to glutamate 577 enclose the NR LBD domain. 2 positions are modified to phosphoserine; by PKC: serine 461 and serine 568. The required for interaction with NRIP1 stretch occupies residues proline 571 to leucine 590. Lysine 575 is covalently cross-linked (Glycyl lysine isopeptide (Lys-Gly) (interchain with G-Cter in SUMO2)).

Belongs to the nuclear hormone receptor family. NR2 subfamily. In terms of assembly, homodimer. Heterodimer; with NR2C2 which is required for chromatin remodeling and for binding to promoter regions such as globin DR1 repeats. Interacts with ESR1; the interaction prevents homodimerization of ESR1 and suppresses its transcriptional activity and cell growth. Interacts with NRIP1 (via its LXXLL motifs); the interaction provides corepressor activity. Interacts with HDAC3 (via the DNA-binding domain); the interaction recruits phosphorylated NR2C1 to PML bodies for sumoylation. Interacts with HDAC4 (via the DNA-binding domain). Interacts with PIAS1; the interaction is required for sumoylation of NR2C1. Interacts with UBE2I; the interaction is required for sumoylation of NR2C1. Interacts with KAT2B; the interaction acts as a corepressor of gene expression. Sumoylation requires both PIAS1 and UBE2I. Sumoylation appears to dissociate NR2C1 from the PML nuclear bodies. Enhances the interaction with NRIP1 but inhibits interaction with KAT2B. In proliferating cells, stimulation by all-trans retinoic acid, activation of MAPK1-mediated phosphorylation and recruitment to PML bodies with subsequent sumoylation, suppresses OCT4 expression. Post-translationally, phosphorylated on several serine and threonine residues. Phosphorylation on Thr-210, stimulated by all-trans retinoic acid (atRA) mediates PML location and sumoylation in proliferating cells which then modulates its association with effector molecules, KAT2B and NRIP1. Phosphorylation on Ser-568 by PKC is important for protein stability and function as activator of RARB. In terms of tissue distribution, isoform 1 is highly expressed in the adlumenal compartment of the seminiferous tubule of adult testes (at protein level) and in the eyes of newborn animals. Weakly expressed in other adult organs including the seminal vesicle, prostate, ovary, adrenal gland, heart, thymus, placenta and brain. Expressed during embryonic stages in developing eyes, brain and cartilage primordia (at protein level). Also expressed in the developing spinal motor neurons and in the sympathetic-, parasympathetic- and sensory ganglia of the embryonic PNS. Expressed in the developing neural epithelia of the inner ear, nasal cavity, tongue and retina. At day 16.5, expressed in various tissues including kidney and intestine. In contrast, isoform 2 is widely expressed at a low level throughout the adult testis.

The protein resides in the nucleus. Its subcellular location is the PML body. Its function is as follows. Orphan nuclear receptor. Binds the IR7 element in the promoter of its own gene in an autoregulatory negative feedback mechanism. Primarily repressor of a broad range of genes including ESR1 and RARB. Together with NR2C2, forms the core of the DRED (direct repeat erythroid-definitive) complex that represses embryonic and fetal globin transcription. Binds to hormone response elements (HREs) consisting of two 5'-AGGTCA-3' half site direct repeat consensus sequences. Also activator of OCT4 gene expression. Plays a fundamental role in early embryogenesis and regulates embryonic stem cell proliferation and differentiation. Mediator of retinoic acid-regulated preadipocyte proliferation. The polypeptide is Nuclear receptor subfamily 2 group C member 1 (Mus musculus (Mouse)).